Consider the following 248-residue polypeptide: Ribonuclease PH (248 aa).

Residues Arg-86 and 124–126 contribute to the phosphate site; that span reads GTR.

Belongs to the RNase PH family. In terms of assembly, homohexameric ring arranged as a trimer of dimers.

The enzyme catalyses tRNA(n+1) + phosphate = tRNA(n) + a ribonucleoside 5'-diphosphate. In terms of biological role, phosphorolytic 3'-5' exoribonuclease that plays an important role in tRNA 3'-end maturation. Removes nucleotide residues following the 3'-CCA terminus of tRNAs; can also add nucleotides to the ends of RNA molecules by using nucleoside diphosphates as substrates, but this may not be physiologically important. Probably plays a role in initiation of 16S rRNA degradation (leading to ribosome degradation) during starvation. The chain is Ribonuclease PH from Clostridium perfringens (strain SM101 / Type A).